The chain runs to 309 residues: Small ribosomal subunit protein mS23 (309 aa).

The protein belongs to the mitochondrion-specific ribosomal protein mS23 family. As to quaternary structure, component of the mitochondrial small ribosomal subunit.

The protein resides in the mitochondrion. The chain is Small ribosomal subunit protein mS23 (RSM25) from Lodderomyces elongisporus (strain ATCC 11503 / CBS 2605 / JCM 1781 / NBRC 1676 / NRRL YB-4239) (Yeast).